Reading from the N-terminus, the 428-residue chain is Glutamate-1-semialdehyde 2,1-aminomutase (428 aa).

Residue lysine 265 is modified to N6-(pyridoxal phosphate)lysine.

This sequence belongs to the class-III pyridoxal-phosphate-dependent aminotransferase family. HemL subfamily. As to quaternary structure, homodimer. Pyridoxal 5'-phosphate serves as cofactor.

Its subcellular location is the cytoplasm. The enzyme catalyses (S)-4-amino-5-oxopentanoate = 5-aminolevulinate. It participates in porphyrin-containing compound metabolism; protoporphyrin-IX biosynthesis; 5-aminolevulinate from L-glutamyl-tRNA(Glu): step 2/2. In Methylobacillus flagellatus (strain ATCC 51484 / DSM 6875 / VKM B-1610 / KT), this protein is Glutamate-1-semialdehyde 2,1-aminomutase.